Reading from the N-terminus, the 314-residue chain is Nodulation protein D 1 (314 aa).

One can recognise an HTH lysR-type domain in the interval 6–63; sequence LDLNLLVALDALMTERNLTAAARKIHLSQPAMSAAVARLRTYFGDELFTMRGRELVPT. The segment at residues 23-42 is a DNA-binding region (H-T-H motif); sequence LTAAARKIHLSQPAMSAAVA.

This sequence belongs to the LysR transcriptional regulatory family.

Functionally, nodD regulates the expression of the nodABCFE genes which encode other nodulation proteins. NodD is also a negative regulator of its own expression. Binds flavonoids as inducers. In Bradyrhizobium sp. (strain NC92), this protein is Nodulation protein D 1 (nodD1).